A 299-amino-acid polypeptide reads, in one-letter code: Glycine--tRNA ligase alpha subunit (299 aa).

This sequence belongs to the class-II aminoacyl-tRNA synthetase family. As to quaternary structure, tetramer of two alpha and two beta subunits.

The protein localises to the cytoplasm. The catalysed reaction is tRNA(Gly) + glycine + ATP = glycyl-tRNA(Gly) + AMP + diphosphate. In Pediococcus pentosaceus (strain ATCC 25745 / CCUG 21536 / LMG 10740 / 183-1w), this protein is Glycine--tRNA ligase alpha subunit.